Reading from the N-terminus, the 244-residue chain is DNA repair protein RecO (244 aa).

The protein belongs to the RecO family.

Its function is as follows. Involved in DNA repair and RecF pathway recombination. This is DNA repair protein RecO from Koribacter versatilis (strain Ellin345).